A 489-amino-acid polypeptide reads, in one-letter code: NF-kappa-B inhibitor cactus (489 aa).

Positions M1–S26 are enriched in low complexity. Disordered stretches follow at residues M1 to L138 and N163 to S203. The residue at position 45 (S45) is a Phosphoserine; by PKC. The span at N69–C86 shows a compositional bias: polar residues. Residue S135 is modified to Phosphoserine; by PKC. Over residues N163–Q180 the composition is skewed to polar residues. Phosphothreonine; by PKC is present on T174. The segment covering S181–S203 has biased composition (low complexity). 5 ANK repeats span residues D220–I252, V256–D285, H287–I316, D350–A379, and S384–L413. T308 carries the post-translational modification Phosphothreonine; by PKC. At S384 the chain carries Phosphoserine; by PKC.

The protein resides in the cytoplasm. Its function is as follows. Involved in the formation of the dorsoventral pattern. It inhibits nuclear translocation of the dorsal morphogen in the dorsal region of the embryo. The protein is NF-kappa-B inhibitor cactus (cact) of Drosophila yakuba (Fruit fly).